The chain runs to 477 residues: Probable ribonuclease FAU-1 (477 aa).

The protein belongs to the FAU-1 family.

Its function is as follows. Probable RNase involved in rRNA stability through maturation and/or degradation of precursor rRNAs. Binds to RNA in loop regions with AU-rich sequences. This chain is Probable ribonuclease FAU-1, found in Staphylothermus marinus (strain ATCC 43588 / DSM 3639 / JCM 9404 / F1).